The following is a 1097-amino-acid chain: Chitin synthase 2 (1097 aa).

The segment at M1–G46 is disordered. The Extracellular segment spans residues M1–Q748. Over residues T8–G19 the composition is skewed to gly residues. N55 is a glycosylation site (N-linked (GlcNAc...) asparagine). 2 disordered regions span residues S148–Y217 and S259–Q322. Over residues S284–S296 the composition is skewed to polar residues. The segment covering D299–H313 has biased composition (basic and acidic residues). N416 and N424 each carry an N-linked (GlcNAc...) asparagine glycan. Residues L749–G769 traverse the membrane as a helical segment. At L770 to R786 the chain is on the cytoplasmic side. Residues I787–S807 form a helical membrane-spanning segment. Over L808–A821 the chain is Extracellular. Residues S822–V842 form a helical membrane-spanning segment. The Cytoplasmic segment spans residues R843–T865. A helical membrane pass occupies residues N866–L886. Residues D887–S894 lie on the Extracellular side of the membrane. Residues A895–C915 traverse the membrane as a helical segment. The Cytoplasmic portion of the chain corresponds to N916–Y993. Residues M994–G1014 form a helical membrane-spanning segment. Over D1015–R1025 the chain is Extracellular. The helical transmembrane segment at F1026 to A1046 threads the bilayer. Topologically, residues A1047–R1097 are cytoplasmic.

The protein belongs to the chitin synthase family.

It localises to the cell membrane. It catalyses the reaction [(1-&gt;4)-N-acetyl-beta-D-glucosaminyl](n) + UDP-N-acetyl-alpha-D-glucosamine = [(1-&gt;4)-N-acetyl-beta-D-glucosaminyl](n+1) + UDP + H(+). In terms of biological role, polymerizes chitin, a structural polymer of the cell wall and septum, by transferring the sugar moiety of UDP-GlcNAc to the non-reducing end of the growing chitin polymer. The polypeptide is Chitin synthase 2 (chs-2) (Neurospora crassa (strain ATCC 24698 / 74-OR23-1A / CBS 708.71 / DSM 1257 / FGSC 987)).